The sequence spans 252 residues: Chitooligosaccharide deacetylase (252 aa).

Positions 61 and 125 each coordinate Mg(2+).

This sequence belongs to the YdjC deacetylase family. ChbG subfamily. Homodimer. Requires Mg(2+) as cofactor.

The protein resides in the cytoplasm. It carries out the reaction N,N'-diacetylchitobiose + H2O = N-acetyl-beta-D-glucosaminyl-(1-&gt;4)-D-glucosamine + acetate. The enzyme catalyses diacetylchitobiose-6'-phosphate + H2O = N'-monoacetylchitobiose-6'-phosphate + acetate. It participates in glycan degradation; chitin degradation. Involved in the degradation of chitin. ChbG is essential for growth on the acetylated chitooligosaccharides chitobiose and chitotriose but is dispensable for growth on cellobiose and chitosan dimer, the deacetylated form of chitobiose. Deacetylation of chitobiose-6-P and chitotriose-6-P is necessary for both the activation of the chb promoter by the regulatory protein ChbR and the hydrolysis of phosphorylated beta-glucosides by the phospho-beta-glucosidase ChbF. Catalyzes the removal of only one acetyl group from chitobiose-6-P to yield monoacetylchitobiose-6-P, the inducer of ChbR and the substrate of ChbF. The chain is Chitooligosaccharide deacetylase from Salmonella typhi.